The sequence spans 348 residues: MSKQTLILLYGGRSAEREVSVLSAESVMRAVDYTKFFVKTYFISQTGQFIKTQEFSSRPTLTERLMTNDTIRLEQQIRPSDIYEEGAVVFPVLHGPMGEDGSIQGFLEVLKMPYVGTNILSSSVAMDKITTKRVLESAGIPQVAYTVYIEGQDLDRCLAETEAVLSYPVFVKPANMGSSVGISKAESEEELRAAILLALTYDSRILIEQGVLAREIEVGLLGNTDVKSTLPGEVVKNVDFYDYQAKYIDNEITMAIPAAIDESAMTSMRTYAETAFKAIGACGLSRCDFFLGQDGQIYLNELNTMPGFTQWSMYPLLWEHMGLSYAELIEELVRLAQEMFEKREGHLI.

Residues 132–334 (KRVLESAGIP…YAELIEELVR (203 aa)) form the ATP-grasp domain. 162-217 (EAVLSYPVFVKPANMGSSVGISKAESEEELRAAILLALTYDSRILIEQGVLAREIE) lines the ATP pocket. Residues aspartate 288, glutamate 301, and asparagine 303 each coordinate Mg(2+).

Belongs to the D-alanine--D-alanine ligase family. Mg(2+) is required as a cofactor. The cofactor is Mn(2+).

Its subcellular location is the cytoplasm. The enzyme catalyses 2 D-alanine + ATP = D-alanyl-D-alanine + ADP + phosphate + H(+). The protein operates within cell wall biogenesis; peptidoglycan biosynthesis. Its function is as follows. Cell wall formation. This chain is D-alanine--D-alanine ligase, found in Streptococcus equi subsp. equi (strain 4047).